A 740-amino-acid chain; its full sequence is Ion-translocating oxidoreductase complex subunit C (740 aa).

4Fe-4S ferredoxin-type domains are found at residues 369–397 (GEPQEEQSCIRCSACADACPADLLPQQLY) and 407–436 (KATTHNIADCIECGACAWVCPSNIPLVQYF). The [4Fe-4S] cluster site is built by C377, C380, C383, C387, C416, C419, C422, and C426. Residues 602–716 (KLEQQQANAE…EPEEQVDPRK (115 aa)) are disordered.

This sequence belongs to the 4Fe4S bacterial-type ferredoxin family. RnfC subfamily. The complex is composed of six subunits: RsxA, RsxB, RsxC, RsxD, RsxE and RsxG. [4Fe-4S] cluster serves as cofactor.

It is found in the cell inner membrane. Its function is as follows. Part of a membrane-bound complex that couples electron transfer with translocation of ions across the membrane. Required to maintain the reduced state of SoxR. This is Ion-translocating oxidoreductase complex subunit C from Escherichia coli (strain SE11).